The sequence spans 334 residues: uncharacterized protein (334 aa).

Belongs to the ADP-ribosylglycohydrolase family.

This is an uncharacterized protein from Escherichia coli (strain K12).